A 1215-amino-acid chain; its full sequence is DNA-directed RNA polymerase subunit beta' (1215 aa).

Residues Cys60, Cys62, Cys75, and Cys78 each contribute to the Zn(2+) site. Residues Asp449, Asp451, and Asp453 each contribute to the Mg(2+) site. Cys818, Cys892, Cys899, and Cys902 together coordinate Zn(2+).

This sequence belongs to the RNA polymerase beta' chain family. As to quaternary structure, the RNAP catalytic core consists of 2 alpha, 1 beta, 1 beta' and 1 omega subunit. When a sigma factor is associated with the core the holoenzyme is formed, which can initiate transcription. Requires Mg(2+) as cofactor. It depends on Zn(2+) as a cofactor.

It catalyses the reaction RNA(n) + a ribonucleoside 5'-triphosphate = RNA(n+1) + diphosphate. DNA-dependent RNA polymerase catalyzes the transcription of DNA into RNA using the four ribonucleoside triphosphates as substrates. The sequence is that of DNA-directed RNA polymerase subunit beta' from Limosilactobacillus fermentum (strain NBRC 3956 / LMG 18251) (Lactobacillus fermentum).